The chain runs to 344 residues: Methionine aminopeptidase 1C, chloroplastic/mitochondrial (344 aa).

A substrate-binding site is contributed by H172. D189, D200, and H262 together coordinate a divalent metal cation. Position 269 (H269) interacts with substrate. Residues E296 and E327 each contribute to the a divalent metal cation site.

This sequence belongs to the peptidase M24A family. Methionine aminopeptidase type 1 subfamily. Requires Co(2+) as cofactor. Zn(2+) serves as cofactor. It depends on Mn(2+) as a cofactor. Fe(2+) is required as a cofactor. Ubiquitous.

The protein localises to the plastid. It is found in the chloroplast. It localises to the mitochondrion. The enzyme catalyses Release of N-terminal amino acids, preferentially methionine, from peptides and arylamides.. Functionally, removes the N-terminal methionine from nascent proteins. The N-terminal methionine is often cleaved when the second residue in the primary sequence is small and uncharged (Met-Ala-, Cys, Gly, Pro, Ser, Thr, or Val). The sequence is that of Methionine aminopeptidase 1C, chloroplastic/mitochondrial (MAP1C) from Arabidopsis thaliana (Mouse-ear cress).